Here is a 104-residue protein sequence, read N- to C-terminus: Guanidinium exporter (104 aa).

Topologically, residues 1–3 (MSW) are cytoplasmic. The helical transmembrane segment at 4–26 (IILFVAGLLEIVWAVGLKYTHGF) threads the bilayer. Residues 27-32 (TRLTPS) lie on the Periplasmic side of the membrane. A helical membrane pass occupies residues 33–50 (IITISAMIVSMGMLSYAM). Residues 51–54 (KGLP) are Cytoplasmic-facing. A helical transmembrane segment spans residues 55-77 (AGTAYAIWTGIGAVGTAIFGIIV). The Periplasmic segment spans residues 78 to 83 (FGESAN). The helical transmembrane segment at 84–103 (IYRLLSLAMIVFGIIGLKLA) threads the bilayer. Residue Ser-104 is a topological domain, cytoplasmic.

It belongs to the drug/metabolite transporter (DMT) superfamily. Small multidrug resistance (SMR) (TC 2.A.7.1) family. Gdx/SugE subfamily.

The protein resides in the cell inner membrane. Its function is as follows. Guanidinium ion exporter. Couples guanidinium export to the proton motive force, exchanging one guanidinium ion for two protons. The sequence is that of Guanidinium exporter from Proteus vulgaris.